Reading from the N-terminus, the 357-residue chain is Cinnamyl alcohol dehydrogenase 7 (357 aa).

Residue cysteine 46 coordinates Zn(2+). Threonine 48 is a binding site for NADP(+). Zn(2+)-binding residues include histidine 68, glutamate 69, cysteine 99, cysteine 102, cysteine 105, cysteine 113, and cysteine 162. Residues threonine 166, 187–192, 210–215, threonine 250, glycine 274, and 297–299 contribute to the NADP(+) site; these read GLGGLG, STSERK, and SMV.

Belongs to the zinc-containing alcohol dehydrogenase family. In terms of assembly, homodimer. It depends on Zn(2+) as a cofactor. In terms of tissue distribution, expressed in the differentiation and elongation zones of primary and lateral roots. Expressed in the hypocotyl, cotyledon and leaf veins, hydathodes and trichomes. In stems, expressed in the vascular cambium region. Expressed in the style, anthers, stamen filaments, vascular tissues of sepals and stigmatic regions in flowers, and abscission, style and stigmatic regions of siliques and seed testa.

It catalyses the reaction (E)-cinnamyl alcohol + NADP(+) = (E)-cinnamaldehyde + NADPH + H(+). It participates in aromatic compound metabolism; phenylpropanoid biosynthesis. In terms of biological role, involved in lignin biosynthesis. Catalyzes the final step specific for the production of lignin monomers. Catalyzes the NADPH-dependent reduction of coniferaldehyde, 5-hydroxyconiferaldehyde, sinapaldehyde, 4-coumaraldehyde and caffeyl aldehyde to their respective alcohols. This Arabidopsis thaliana (Mouse-ear cress) protein is Cinnamyl alcohol dehydrogenase 7 (CAD7).